The chain runs to 262 residues: Phosphonates import ATP-binding protein PhnC (262 aa).

An ABC transporter domain is found at 5–253 (IRVEKLAKTF…RFDHLYRSIN (249 aa)). Residue 37–44 (GPSGSGKS) coordinates ATP.

It belongs to the ABC transporter superfamily. Phosphonates importer (TC 3.A.1.9.1) family. The complex is composed of two ATP-binding proteins (PhnC), two transmembrane proteins (PhnE) and a solute-binding protein (PhnD).

The protein localises to the cell inner membrane. The enzyme catalyses phosphonate(out) + ATP + H2O = phosphonate(in) + ADP + phosphate + H(+). Its function is as follows. Part of the ABC transporter complex PhnCDE involved in phosphonates import. Responsible for energy coupling to the transport system. In Escherichia coli O6:H1 (strain CFT073 / ATCC 700928 / UPEC), this protein is Phosphonates import ATP-binding protein PhnC.